The following is a 639-amino-acid chain: MAU2 chromatid cohesion factor homolog (639 aa).

TPR repeat units follow at residues 453–486 (GGFY…ANAE) and 493–526 (SCSL…ASKI).

This sequence belongs to the SCC4/mau-2 family. In terms of assembly, interacts with Nipped-B to form the cohesin loading complex.

It localises to the nucleus. It is found in the nucleoplasm. In terms of biological role, required for association of the cohesin complex with chromatin during interphase. Plays a role in sister chromatid cohesion and normal progression through prometaphase. This chain is MAU2 chromatid cohesion factor homolog, found in Drosophila ananassae (Fruit fly).